Reading from the N-terminus, the 376-residue chain is Flagellin B (376 aa).

The stretch at S103–T129 forms a coiled coil.

The protein belongs to the bacterial flagellin family. Heteromer of multiple flagellin subunits including FlaA, FlaB, FlaC, FlaD and FlaE.

Its subcellular location is the secreted. The protein localises to the bacterial flagellum. Its function is as follows. Flagellin is the subunit protein which polymerizes to form the filaments of bacterial flagella. FlaB is not essential for flagellar synthesis and motility. The protein is Flagellin B (flaB) of Vibrio cholerae serotype O1 (strain ATCC 39541 / Classical Ogawa 395 / O395).